Consider the following 1403-residue polypeptide: DNA-directed RNA polymerase subunit beta' (1403 aa).

Zn(2+) is bound by residues C70, C72, C85, and C88. Positions 461, 463, and 465 each coordinate Mg(2+). Residues C816, C890, C897, and C900 each coordinate Zn(2+).

Belongs to the RNA polymerase beta' chain family. In terms of assembly, the RNAP catalytic core consists of 2 alpha, 1 beta, 1 beta' and 1 omega subunit. When a sigma factor is associated with the core the holoenzyme is formed, which can initiate transcription. Mg(2+) is required as a cofactor. The cofactor is Zn(2+).

The enzyme catalyses RNA(n) + a ribonucleoside 5'-triphosphate = RNA(n+1) + diphosphate. Its function is as follows. DNA-dependent RNA polymerase catalyzes the transcription of DNA into RNA using the four ribonucleoside triphosphates as substrates. The chain is DNA-directed RNA polymerase subunit beta' from Dechloromonas aromatica (strain RCB).